Here is a 281-residue protein sequence, read N- to C-terminus: Proteasome subunit beta (281 aa).

A propeptide spans 1 to 53 (MEANTRSTGRLPAAFLTPGSSSFMDFLSDHQPELLPGKRQLPPTQGVIEAPHG) (removed in mature form; by autocatalysis). Threonine 54 acts as the Nucleophile in catalysis.

Belongs to the peptidase T1B family. In terms of assembly, the 20S proteasome core is composed of 14 alpha and 14 beta subunits that assemble into four stacked heptameric rings, resulting in a barrel-shaped structure. The two inner rings, each composed of seven catalytic beta subunits, are sandwiched by two outer rings, each composed of seven alpha subunits. The catalytic chamber with the active sites is on the inside of the barrel. Has a gated structure, the ends of the cylinder being occluded by the N-termini of the alpha-subunits. Is capped by the proteasome-associated ATPase, ARC.

The protein localises to the cytoplasm. The catalysed reaction is Cleavage of peptide bonds with very broad specificity.. It participates in protein degradation; proteasomal Pup-dependent pathway. The formation of the proteasomal ATPase ARC-20S proteasome complex, likely via the docking of the C-termini of ARC into the intersubunit pockets in the alpha-rings, may trigger opening of the gate for substrate entry. Interconversion between the open-gate and close-gate conformations leads to a dynamic regulation of the 20S proteasome proteolysis activity. In terms of biological role, component of the proteasome core, a large protease complex with broad specificity involved in protein degradation. This chain is Proteasome subunit beta, found in Streptomyces scabiei (strain 87.22).